We begin with the raw amino-acid sequence, 545 residues long: Chaperonin GroEL (545 aa).

Residues 30–33 (TLGP), Lys-51, 87–91 (DGTTT), Gly-415, 479–481 (NAA), and Asp-495 contribute to the ATP site.

It belongs to the chaperonin (HSP60) family. In terms of assembly, forms a cylinder of 14 subunits composed of two heptameric rings stacked back-to-back. Interacts with the co-chaperonin GroES.

The protein localises to the cytoplasm. It catalyses the reaction ATP + H2O + a folded polypeptide = ADP + phosphate + an unfolded polypeptide.. In terms of biological role, together with its co-chaperonin GroES, plays an essential role in assisting protein folding. The GroEL-GroES system forms a nano-cage that allows encapsulation of the non-native substrate proteins and provides a physical environment optimized to promote and accelerate protein folding. This is Chaperonin GroEL from Tolumonas auensis (strain DSM 9187 / NBRC 110442 / TA 4).